Reading from the N-terminus, the 218-residue chain is Elongation factor Ts (218 aa).

The involved in Mg(2+) ion dislocation from EF-Tu stretch occupies residues 82–85 (TDFV).

The protein belongs to the EF-Ts family.

The protein localises to the cytoplasm. Associates with the EF-Tu.GDP complex and induces the exchange of GDP to GTP. It remains bound to the aminoacyl-tRNA.EF-Tu.GTP complex up to the GTP hydrolysis stage on the ribosome. The protein is Elongation factor Ts of Picosynechococcus sp. (strain ATCC 27264 / PCC 7002 / PR-6) (Agmenellum quadruplicatum).